A 179-amino-acid polypeptide reads, in one-letter code: Ribosome maturation factor RimM (179 aa).

One can recognise a PRC barrel domain in the interval Pro-98–Leu-170.

Belongs to the RimM family. As to quaternary structure, binds ribosomal protein uS19.

Its subcellular location is the cytoplasm. Its function is as follows. An accessory protein needed during the final step in the assembly of 30S ribosomal subunit, possibly for assembly of the head region. Essential for efficient processing of 16S rRNA. May be needed both before and after RbfA during the maturation of 16S rRNA. It has affinity for free ribosomal 30S subunits but not for 70S ribosomes. The chain is Ribosome maturation factor RimM from Cutibacterium acnes (strain DSM 16379 / KPA171202) (Propionibacterium acnes).